We begin with the raw amino-acid sequence, 259 residues long: Trans-4-hydroxycyclohexanecarboxylate dehydrogenase (259 aa).

Positions 20, 22, 41, 73, 74, 100, 164, 168, 197, 199, and 202 each coordinate NAD(+). The active-site Proton acceptor is Tyr164.

Belongs to the short-chain dehydrogenases/reductases (SDR) family. As to quaternary structure, homodimer. Homotetramer.

It catalyses the reaction trans-4-hydroxycyclohexane-1-carboxylate + NAD(+) = 4-oxocyclohexane-1-carboxylate + NADH + H(+). With respect to regulation, strongly inhibited by N-bromosuccinimide. Not inhibited by sulfhydryl reagents, such as iodoacetic acid, iodoacetamide, N-ethylmaleimide and p-hydroxymercuribenzoic acid. Its function is as follows. Dehydrogenase involved in a cyclohexanecarboxylate (CHCA) degradation pathway. Catalyzes the NAD(+)-dependent dehydrogenation of trans-4-hydroxycyclohexanecarboxylate (trans-4-hydroxyCHCA) to form 4-oxocyclohexanecarboxylate (4-oxoCHCA). Is highly specific for the trans-4-hydroxy derivative and shows only weak activity with cis-4-hydroxyCHCA. Can also catalyze the reverse reaction (4-oxoCHCA reduction) with a higher catalytic efficiency. In the reverse reaction, is highly specific for 4-oxoCHCA and cannot use either the 2-oxo or the 3-oxo homolog as substrate. Cannot use NADP(+). The sequence is that of Trans-4-hydroxycyclohexanecarboxylate dehydrogenase from Sinomonas cyclohexanicum (Corynebacterium cyclohexanicum).